The primary structure comprises 168 residues: Lipoprotein signal peptidase (168 aa).

4 helical membrane-spanning segments follow: residues 15-35, 47-67, 75-95, and 107-127; these read WLWL…VVMD, VLPF…SFLS, WLFT…MSKL, and ALII…GFVV. Catalysis depends on residues Asp-128 and Asp-146. A helical membrane pass occupies residues 141 to 161; sequence AFNLADTTICIGAAMIILDGF.

The protein belongs to the peptidase A8 family.

The protein localises to the cell inner membrane. The catalysed reaction is Release of signal peptides from bacterial membrane prolipoproteins. Hydrolyzes -Xaa-Yaa-Zaa-|-(S,diacylglyceryl)Cys-, in which Xaa is hydrophobic (preferably Leu), and Yaa (Ala or Ser) and Zaa (Gly or Ala) have small, neutral side chains.. It functions in the pathway protein modification; lipoprotein biosynthesis (signal peptide cleavage). This protein specifically catalyzes the removal of signal peptides from prolipoproteins. The sequence is that of Lipoprotein signal peptidase from Vibrio campbellii (strain ATCC BAA-1116).